The chain runs to 279 residues: Protein BASIC PENTACYSTEINE2 (279 aa).

A disordered region spans residues 126-167 (TKKRKTNAKAGSTPKAKKPRKPKDENSNNNNNNNTNVTRVKP). Over residues 152–161 (SNNNNNNNTN) the composition is skewed to low complexity.

Belongs to the BBR/BPC family. As to expression, expressed in seedlings, leaves and pistils. Detected in the base of flowers and tips of carpels, in sepal and petal vasculature, in pollen grains, in young rosette, in the lateral and tip of primary roots, and in ovule at the exception of the outer integument.

Its subcellular location is the nucleus. Functionally, transcriptional regulator that specifically binds to GA-rich elements (GAGA-repeats) present in regulatory sequences of genes involved in developmental processes. The protein is Protein BASIC PENTACYSTEINE2 of Arabidopsis thaliana (Mouse-ear cress).